Reading from the N-terminus, the 373-residue chain is Alginate lyase (373 aa).

Positions 1 to 25 (MRLPMQKLLIPTLLGLAMFAGSVNA) are cleaved as a signal peptide. Residues 66-67 (SK), 139-140 (HT), and Tyr-257 contribute to the substrate site.

Belongs to the polysaccharide lyase 5 family.

It localises to the periplasm. The enzyme catalyses Eliminative cleavage of alginate to give oligosaccharides with 4-deoxy-alpha-L-erythro-hex-4-enuronosyl groups at their non-reducing ends and beta-D-mannuronate at their reducing end.. Functionally, catalyzes the depolymerization of alginate by cleaving the beta-1,4 glycosidic bond between two adjacent sugar residues via a beta-elimination mechanism. May serve to degrade mislocalized alginate that is trapped in the periplasmic space. This Pseudomonas fluorescens protein is Alginate lyase.